A 2110-amino-acid polypeptide reads, in one-letter code: Protein Ycf2 (2110 aa).

A disordered region spans residues 190 to 209; that stretch reads DSSQLKGSSDQSRDPLDSIS. 1442 to 1449 is a binding site for ATP; that stretch reads GSIGTGRS.

This sequence belongs to the Ycf2 family.

The protein localises to the plastid. It localises to the chloroplast stroma. Functionally, probable ATPase of unknown function. Its presence in a non-photosynthetic plant (Epifagus virginiana) and experiments in tobacco indicate that it has an essential function which is probably not related to photosynthesis. The sequence is that of Protein Ycf2 from Panax ginseng (Korean ginseng).